A 471-amino-acid polypeptide reads, in one-letter code: Glutamate--tRNA ligase (471 aa).

The short motif at 9–19 (PSPTGYLHVGG) is the 'HIGH' region element. The Zn(2+) site is built by Cys98, Cys100, Cys125, and His127. The 'KMSKS' region signature appears at 237–241 (KLSKR). Lys240 contacts ATP.

Belongs to the class-I aminoacyl-tRNA synthetase family. Glutamate--tRNA ligase type 1 subfamily. As to quaternary structure, monomer. It depends on Zn(2+) as a cofactor.

The protein localises to the cytoplasm. It catalyses the reaction tRNA(Glu) + L-glutamate + ATP = L-glutamyl-tRNA(Glu) + AMP + diphosphate. Its function is as follows. Catalyzes the attachment of glutamate to tRNA(Glu) in a two-step reaction: glutamate is first activated by ATP to form Glu-AMP and then transferred to the acceptor end of tRNA(Glu). The sequence is that of Glutamate--tRNA ligase from Salmonella paratyphi A (strain ATCC 9150 / SARB42).